A 248-amino-acid polypeptide reads, in one-letter code: 5'-nucleotidase SurE (248 aa).

D8, D9, S39, and N91 together coordinate a divalent metal cation.

It belongs to the SurE nucleotidase family. A divalent metal cation is required as a cofactor.

It is found in the cytoplasm. The enzyme catalyses a ribonucleoside 5'-phosphate + H2O = a ribonucleoside + phosphate. In terms of biological role, nucleotidase that shows phosphatase activity on nucleoside 5'-monophosphates. This chain is 5'-nucleotidase SurE, found in Citrifermentans bemidjiense (strain ATCC BAA-1014 / DSM 16622 / JCM 12645 / Bem) (Geobacter bemidjiensis).